The sequence spans 226 residues: X-linked lymphocyte-regulated protein 3A (226 aa).

The segment covering 1–18 (MSSRERKATDTAGRHSRM) has biased composition (basic and acidic residues). The tract at residues 1 to 72 (MSSRERKATD…QDLVQEFEEP (72 aa)) is disordered. Over residues 21–30 (NLSSDDSQNP) the composition is skewed to polar residues. Composition is skewed to basic and acidic residues over residues 39-48 (EVLDAGREDI) and 56-65 (QQARKEKQDL). The stretch at 155–210 (ETLTLQKNRMEEFKSLCEKYLEKLEVLRDSRGNSIAEELRRLIATLEIKLLMLHNQ) forms a coiled coil.

It belongs to the XLR/SYCP3 family. As to expression, expressed in lymphoid cells.

The chain is X-linked lymphocyte-regulated protein 3A (Xlr3a) from Mus musculus (Mouse).